A 315-amino-acid polypeptide reads, in one-letter code: Neuroguidin (315 aa).

At Ala-2 the chain carries N-acetylalanine. The stretch at 7–41 (LESDVSSSITLLKNLQEQVMAVTAQIQALTTKVRA) forms a coiled coil. Residues 41–174 (AGTYSTEKGL…KGSAKKYVPP (134 aa)) form a necessary for interaction with EIF4E region. A phosphoserine mark is found at Ser-121, Ser-142, and Ser-143. Residues 123–190 (SENDPLRFKP…YDETEAEREQ (68 aa)) form a disordered region. Acidic residues predominate over residues 144–155 (EDEEESEAEEGQ). The span at 180-190 (HYDETEAEREQ) shows a compositional bias: basic and acidic residues. A coiled-coil region spans residues 181–203 (YDETEAEREQKRLEKAKRRALSS). A phosphoserine mark is found at Ser-204 and Ser-214. Basic and acidic residues-rich tracts occupy residues 212 to 225 (QYSDAPEEIRDARH) and 232 to 241 (SQEDQHRVNY). Disordered stretches follow at residues 212 to 243 (QYSDAPEEIRDARHPHVTRQSQEDQHRVNYEE) and 284 to 315 (GTAHLDEDQNPVKKRKKLPKKGRKKKGFRRRW). Residues 295 to 315 (VKKRKKLPKKGRKKKGFRRRW) are compositionally biased toward basic residues.

Belongs to the SAS10 family. As to quaternary structure, interacts with CPEB1 and EIF4E. In terms of tissue distribution, expressed in testis, ovary, spleen, kidney, hippocampus and cerebellum (at protein level). Expressed in testis, ovary, spleen, kidney, brain.

It is found in the nucleus. It localises to the nucleolus. Its subcellular location is the chromosome. The protein localises to the centromere. The protein resides in the cytoplasm. It is found in the cell projection. It localises to the axon. Its subcellular location is the dendrite. The protein localises to the filopodium. In terms of biological role, part of the small subunit (SSU) processome, first precursor of the small eukaryotic ribosomal subunit. During the assembly of the SSU processome in the nucleolus, many ribosome biogenesis factors, an RNA chaperone and ribosomal proteins associate with the nascent pre-rRNA and work in concert to generate RNA folding, modifications, rearrangements and cleavage as well as targeted degradation of pre-ribosomal RNA by the RNA exosome. Its dissociation from the complex determines the transition from state pre-A1 to state pre-A1*. Inhibits mRNA translation in a cytoplasmic polyadenylation element (CPE)-dependent manner. This chain is Neuroguidin (Ngdn), found in Mus musculus (Mouse).